The primary structure comprises 1161 residues: MAASRNASTANTNNAASTAPLRISFAKIKEPLEVPNLLALQTESFDWLLGNDAWKARVESALESGQDVPTKSGLEEIFEEISPIEDFSGSMSLTFRDHRFEPPKNSIDECKDRDFTYAAPLFVTAEFTNNETGEIKSQTVFMGDFPLMTNKGTFVINGTERVVVSQLVRSPGVYFDSSIDKTSDKDIFSAKIIPSRGAWLEMEIDKRDMVGVRIDRKRKQSVTVLLKALGWTTEQILEEFGEYESMRATLEKDHTQGQDDALLDIYRKLRPGEPPTREAAQTLLENLYFNPKRYDLAKVGRYKVNKKLGADEPLDAGVLTTDDVIATIKYLVKLHAGETETVGESGREIVVETDDIDHFGNRRIRNVGELIQNQVRTGLARMERVVRERMTTQDVEAITPQTLINIRPVVASIKEFFGTSQLSQFMDQNNPLSGLTHKRRLNALGPGGLSRERAGFEVRDVHPSHYGRMCPIETPEGPNIGLIGSLASYGRINPFGFIETPYRKVVEGQVTDDVDYLTADEEDRFVIAQANAALGDDMRFAEARVLVRRRGGEVDYVPGDDVDYMDVSPRQMVSVATAMIPFLEHDDANRALMGANMMRQAVPLIKSESPLVGTGMEYRSAADAGDVVKAEKAGVVQEVSADYITTTNDDGTYITYRLAKFSRSNQGTSVNQKVIVAEGDRIIEGQVLADGPATENGEMALGKNLLVAFMPWEGHNYEDAIILSQRLVQDDVLSSIHIEEHEVDARDTKLGPEEITRDIPNVSEEVLADLDERGIIRIGAEVVAGDILVGKVTPKGETELTPEERLLRAIFGEKAREVRDTSLKVPHGEIGKVIGVRVFDREEGDELPPGVNQLVRVYVAQKRKITDGDKLAGRHGNKGVISKINPIEDMPFLEDGTPVDIILNPLAVPSRMNPGQVLEIHLGWLASRGWDVSGLAEEWAQRLQVIGADKVEPGTNVATPVFDGAREDELAGLLQHTIPNRDGERMVLPSGKARLFDGRSGEPFPEPISVGYMYILKLHHLVDDKLHARSTGPYSMITQQPLGGKAQFGGQRFGEMEVWALEAYGAAYALQELLTIKSDDVTGRVKVYEAIVKGENIPEPGIPESFKVLIKEMQSLCLNVEVLSSDGMSIEMRDTDEDVFRAAEELGIDLSRREPSSVEEV.

This sequence belongs to the RNA polymerase beta chain family. The RNAP catalytic core consists of 2 alpha, 1 beta, 1 beta' and 1 omega subunit. When a sigma factor is associated with the core the holoenzyme is formed, which can initiate transcription. The RNAP complex including the principal sigma factor HrdB also interacts with RNA-binding protein RbpA.

It carries out the reaction RNA(n) + a ribonucleoside 5'-triphosphate = RNA(n+1) + diphosphate. Functionally, DNA-dependent RNA polymerase catalyzes the transcription of DNA into RNA using the four ribonucleoside triphosphates as substrates. The protein is DNA-directed RNA polymerase subunit beta of Streptomyces coelicolor (strain ATCC BAA-471 / A3(2) / M145).